Here is a 274-residue protein sequence, read N- to C-terminus: Ribosomal RNA small subunit methyltransferase A (274 aa).

Residues His15, Leu17, Gly42, Glu64, Asp89, and Asn108 each contribute to the S-adenosyl-L-methionine site.

The protein belongs to the class I-like SAM-binding methyltransferase superfamily. rRNA adenine N(6)-methyltransferase family. RsmA subfamily.

It localises to the cytoplasm. The catalysed reaction is adenosine(1518)/adenosine(1519) in 16S rRNA + 4 S-adenosyl-L-methionine = N(6)-dimethyladenosine(1518)/N(6)-dimethyladenosine(1519) in 16S rRNA + 4 S-adenosyl-L-homocysteine + 4 H(+). Its function is as follows. Specifically dimethylates two adjacent adenosines (A1518 and A1519) in the loop of a conserved hairpin near the 3'-end of 16S rRNA in the 30S particle. May play a critical role in biogenesis of 30S subunits. The protein is Ribosomal RNA small subunit methyltransferase A of Prochlorococcus marinus (strain AS9601).